We begin with the raw amino-acid sequence, 362 residues long: Heat-inducible transcription repressor HrcA (362 aa).

The protein belongs to the HrcA family.

In terms of biological role, negative regulator of class I heat shock genes (grpE-dnaK-dnaJ and groELS operons). Prevents heat-shock induction of these operons. The polypeptide is Heat-inducible transcription repressor HrcA (Nitrobacter hamburgensis (strain DSM 10229 / NCIMB 13809 / X14)).